Here is a 363-residue protein sequence, read N- to C-terminus: Phosphoserine aminotransferase (363 aa).

Residue arginine 42 participates in L-glutamate binding. Residues 76–77, tryptophan 101, threonine 151, aspartate 170, and glutamine 193 contribute to the pyridoxal 5'-phosphate site; that span reads AS. At lysine 194 the chain carries N6-(pyridoxal phosphate)lysine. 234–235 is a binding site for pyridoxal 5'-phosphate; the sequence is NT.

It belongs to the class-V pyridoxal-phosphate-dependent aminotransferase family. SerC subfamily. Homodimer. It depends on pyridoxal 5'-phosphate as a cofactor.

The protein resides in the cytoplasm. The catalysed reaction is O-phospho-L-serine + 2-oxoglutarate = 3-phosphooxypyruvate + L-glutamate. It carries out the reaction 4-(phosphooxy)-L-threonine + 2-oxoglutarate = (R)-3-hydroxy-2-oxo-4-phosphooxybutanoate + L-glutamate. The protein operates within amino-acid biosynthesis; L-serine biosynthesis; L-serine from 3-phospho-D-glycerate: step 2/3. In terms of biological role, catalyzes the reversible conversion of 3-phosphohydroxypyruvate to phosphoserine and of 3-hydroxy-2-oxo-4-phosphonooxybutanoate to phosphohydroxythreonine. In Listeria innocua serovar 6a (strain ATCC BAA-680 / CLIP 11262), this protein is Phosphoserine aminotransferase.